Reading from the N-terminus, the 667-residue chain is tRNA 5-methylaminomethyl-2-thiouridine biosynthesis bifunctional protein MnmC (667 aa).

Residues 1 to 241 (MHKLTFAQLS…KREMLCGEKA (241 aa)) form a tRNA (mnm(5)s(2)U34)-methyltransferase region. Residues 268 to 667 (VGGGIASLFV…RKWLKGSKVV (400 aa)) are FAD-dependent cmnm(5)s(2)U34 oxidoreductase.

In the N-terminal section; belongs to the methyltransferase superfamily. tRNA (mnm(5)s(2)U34)-methyltransferase family. The protein in the C-terminal section; belongs to the DAO family. The cofactor is FAD.

It is found in the cytoplasm. It carries out the reaction 5-aminomethyl-2-thiouridine(34) in tRNA + S-adenosyl-L-methionine = 5-methylaminomethyl-2-thiouridine(34) in tRNA + S-adenosyl-L-homocysteine + H(+). Its function is as follows. Catalyzes the last two steps in the biosynthesis of 5-methylaminomethyl-2-thiouridine (mnm(5)s(2)U) at the wobble position (U34) in tRNA. Catalyzes the FAD-dependent demodification of cmnm(5)s(2)U34 to nm(5)s(2)U34, followed by the transfer of a methyl group from S-adenosyl-L-methionine to nm(5)s(2)U34, to form mnm(5)s(2)U34. The chain is tRNA 5-methylaminomethyl-2-thiouridine biosynthesis bifunctional protein MnmC from Haemophilus ducreyi (strain 35000HP / ATCC 700724).